Reading from the N-terminus, the 407-residue chain is Zinc finger protein 174 (407 aa).

The segment at 1–20 (MAAKMEITLSSNTEASSKQE) is disordered. Lys-26 participates in a covalent cross-link: Glycyl lysine isopeptide (Lys-Gly) (interchain with G-Cter in SUMO2). The SCAN box domain occupies 59-124 (GPQEALSQLR…KEIVTLVEDF (66 aa)). The disordered stretch occupies residues 150–270 (GSQLGEQELP…RRQVSSPNAQ (121 aa)). Residue Lys-204 forms a Glycyl lysine isopeptide (Lys-Gly) (interchain with G-Cter in SUMO2) linkage. Residues 211-221 (PRMRSDNKENP) show a composition bias toward basic and acidic residues. Residues Lys-230 and Lys-271 each participate in a glycyl lysine isopeptide (Lys-Gly) (interchain with G-Cter in SUMO2) cross-link. 3 C2H2-type zinc fingers span residues 326–348 (YKCD…KRVH), 354–376 (YTCG…QRIH), and 382–405 (YQCG…RLHH).

It belongs to the krueppel C2H2-type zinc-finger protein family. As to quaternary structure, homodimer. As to expression, expressed in a variety of organs, but most strongly in adult testis and ovary followed by small intestine, colon, prostate, thymus, spleen, pancreas, skeletal muscle, heart, brain and kidney. Also expressed in umbilical vein endothelial cells, foreskin fibroblast and Hep-G2 cells.

It localises to the nucleus. In terms of biological role, transcriptional repressor. This Homo sapiens (Human) protein is Zinc finger protein 174 (ZNF174).